Consider the following 252-residue polypeptide: MNILLSNDDGIMSPGIITLKTYLQQKHDVYVVAPDIERSATGHGITVRNPLWAKKVKFGDTFFGHAVNGTPADCVKIGLDAIYKDIHFDVVISGINRGANLGTDVLYSGTVSAALEGAVGGYPSIAVSCVDFSNPNFEDGAKVVLNILEKLDLNNWPEFTTLNVNIPKIPYDEMKGIKITKQSRRRYQDYFEERKDPFGNSYYWMLGNIIEDDNDDNSDYNVINQGYVAVTPLSVFMTKYDFIDELKSWLEV.

Residues Asp-8, Asp-9, Ser-39, and Asn-96 each coordinate a divalent metal cation.

The protein belongs to the SurE nucleotidase family. A divalent metal cation is required as a cofactor.

Its subcellular location is the cytoplasm. The enzyme catalyses a ribonucleoside 5'-phosphate + H2O = a ribonucleoside + phosphate. Functionally, nucleotidase that shows phosphatase activity on nucleoside 5'-monophosphates. This chain is 5'-nucleotidase SurE, found in Petrotoga mobilis (strain DSM 10674 / SJ95).